Here is a 165-residue protein sequence, read N- to C-terminus: Nucleotide-binding protein Ccon26_01810 (165 aa).

Belongs to the YajQ family.

Its function is as follows. Nucleotide-binding protein. This Campylobacter concisus (strain 13826) protein is Nucleotide-binding protein Ccon26_01810.